The sequence spans 177 residues: UPF0114 protein jhp_0175 (177 aa).

The next 3 helical transmembrane spans lie at 15–35, 54–74, and 145–165; these read WLLA…GYVF, LVLS…VLMV, and PIFW…LTAV.

Belongs to the UPF0114 family.

The protein resides in the cell membrane. The protein is UPF0114 protein jhp_0175 of Helicobacter pylori (strain J99 / ATCC 700824) (Campylobacter pylori J99).